The primary structure comprises 326 residues: Glutaredoxin 3 (326 aa).

The Thioredoxin domain occupies 1–108 (MANFTDAASL…LTNKVQRLGS (108 aa)). 2 consecutive Glutaredoxin domains span residues 125 to 227 (NQRL…VSLE) and 227 to 326 (ENRL…KGEN). C150 and C252 together coordinate [2Fe-2S] cluster.

As to quaternary structure, homodimer; the homodimer is independent of 2Fe-2S clusters. Heterotrimer; forms a heterotrimeric complex composed by two bola2 molecules and one glrx3 molecule; linked by [2Fe-2S] clusters.

It localises to the cytoplasm. The protein localises to the cytosol. Together with bola2, acts as a cytosolic iron-sulfur (Fe-S) cluster assembly factor that facilitates [2Fe-2S] cluster insertion into a subset of cytosolic proteins. Required for hemoglobin maturation. Does not possess any thyoredoxin activity since it lacks the conserved motif that is essential for catalytic activity. In Danio rerio (Zebrafish), this protein is Glutaredoxin 3 (glrx3).